The sequence spans 104 residues: N(4)-acetylcytidine amidohydrolase (104 aa).

An ASCH domain is found at 6–101 (TFFERFEHDI…EQLYMIRFKV (96 aa)). Lys20 serves as the catalytic Proton acceptor. Thr23 functions as the Nucleophile in the catalytic mechanism. Catalysis depends on Glu73, which acts as the Proton donor.

The protein belongs to the N(4)-acetylcytidine amidohydrolase family.

It carries out the reaction N(4)-acetylcytidine + H2O = cytidine + acetate + H(+). The catalysed reaction is N(4)-acetyl-2'-deoxycytidine + H2O = 2'-deoxycytidine + acetate + H(+). The enzyme catalyses N(4)-acetylcytosine + H2O = cytosine + acetate + H(+). Its function is as follows. Catalyzes the hydrolysis of N(4)-acetylcytidine (ac4C). In Shewanella oneidensis (strain ATCC 700550 / JCM 31522 / CIP 106686 / LMG 19005 / NCIMB 14063 / MR-1), this protein is N(4)-acetylcytidine amidohydrolase.